Consider the following 266-residue polypeptide: Regulatory protein RecX (266 aa).

The protein belongs to the RecX family.

The protein resides in the cytoplasm. Functionally, modulates RecA activity. This is Regulatory protein RecX from Enterococcus faecalis (strain ATCC 700802 / V583).